The following is a 1034-amino-acid chain: Glycine dehydrogenase (decarboxylating), mitochondrial (1034 aa).

A mitochondrion-targeting transit peptide spans 1-63; that stretch reads MERARRLAML…LNGFGSQVRT (63 aa). N6-(pyridoxal phosphate)lysine is present on K770.

This sequence belongs to the GcvP family. As to quaternary structure, homodimer. The glycine cleavage system is composed of four proteins: P, T, L and H. It depends on pyridoxal 5'-phosphate as a cofactor.

The protein resides in the mitochondrion. It catalyses the reaction N(6)-[(R)-lipoyl]-L-lysyl-[glycine-cleavage complex H protein] + glycine + H(+) = N(6)-[(R)-S(8)-aminomethyldihydrolipoyl]-L-lysyl-[glycine-cleavage complex H protein] + CO2. The glycine cleavage system catalyzes the degradation of glycine. The P protein binds the alpha-amino group of glycine through its pyridoxal phosphate cofactor; CO(2) is released and the remaining methylamine moiety is then transferred to the lipoamide cofactor of the H protein. The sequence is that of Glycine dehydrogenase (decarboxylating), mitochondrial (GDCSPA) from Flaveria trinervia (Clustered yellowtops).